The primary structure comprises 128 residues: Flagellar basal body rod protein FlgB (128 aa).

The protein belongs to the flagella basal body rod proteins family. As to quaternary structure, the basal body constitutes a major portion of the flagellar organelle and consists of a number of rings mounted on a central rod. In Gram-negative bacteria, at least four rings, L, P, S and M are present, whereas Gram-positive bacteria lack the L and P rings. The rod consists of about 26 subunits of FlgG in the distal portion, and FlgB, FlgC and FlgF build up the proximal portion of the rod with about 6 subunits each. Rod assembly occurs by export via the flagellum-specific pathway of its constituent proteins and by their incorporation into the rod structure in the probable order of FlgB, FlgC, FlgF and FlgG. Another protein, FliE, also assembles onto the stable rod structure.

It localises to the bacterial flagellum basal body. Its function is as follows. Structural component of flagellum, the bacterial motility apparatus. Part of the rod structure of flagellar basal body. The sequence is that of Flagellar basal body rod protein FlgB from Cereibacter sphaeroides (strain ATCC 17023 / DSM 158 / JCM 6121 / CCUG 31486 / LMG 2827 / NBRC 12203 / NCIMB 8253 / ATH 2.4.1.) (Rhodobacter sphaeroides).